A 251-amino-acid polypeptide reads, in one-letter code: Adapter protein MecA (251 aa).

The protein belongs to the MecA family. Homodimer.

In terms of biological role, enables the recognition and targeting of unfolded and aggregated proteins to the ClpC protease or to other proteins involved in proteolysis. The sequence is that of Adapter protein MecA from Streptococcus agalactiae serotype Ia (strain ATCC 27591 / A909 / CDC SS700).